Consider the following 237-residue polypeptide: Probable GTP-binding protein EngB (237 aa).

The region spanning 23–209 (AVPEVAFAGR…QAVIAGWLNL (187 aa)) is the EngB-type G domain. Residues 31–38 (GRSNAGKS), 58–62 (GRTQH), 82–85 (DLPG), 149–152 (TKAD), and 187–190 (LFSS) each bind GTP. Serine 38 and threonine 60 together coordinate Mg(2+). The tract at residues 214 to 237 (KAEREPAAANSVPPAVPPASDPAA) is disordered. The segment covering 227 to 237 (PAVPPASDPAA) has biased composition (pro residues).

The protein belongs to the TRAFAC class TrmE-Era-EngA-EngB-Septin-like GTPase superfamily. EngB GTPase family. It depends on Mg(2+) as a cofactor.

Functionally, necessary for normal cell division and for the maintenance of normal septation. In Cupriavidus taiwanensis (strain DSM 17343 / BCRC 17206 / CCUG 44338 / CIP 107171 / LMG 19424 / R1) (Ralstonia taiwanensis (strain LMG 19424)), this protein is Probable GTP-binding protein EngB.